Consider the following 252-residue polypeptide: Transmembrane ascorbate-dependent reductase CYB561 (252 aa).

Methionine 1 carries the post-translational modification N-acetylmethionine. Topologically, residues 1-17 (MEGPASPAPAPGALPYY) are cytoplasmic. A helical transmembrane segment spans residues 18–38 (VAFSQLLGLTVVAMTGAWLGM). In terms of domain architecture, Cytochrome b561 spans 20–221 (FSQLLGLTVV…FATVVLYILT (202 aa)). Over 39-52 (YRGGIAWESALQFN) the chain is Vesicular. The helical transmembrane segment at 53 to 73 (VHPLCMVIGLVFLQGDALLVY) threads the bilayer. Residues histidine 54, arginine 74, and lysine 81 each coordinate heme b. Topologically, residues 74-86 (RVFRNEAKRTTKV) are cytoplasmic. Positions 81 and 85 each coordinate L-ascorbate. The chain crosses the membrane as a helical span at residues 87–107 (LHGLLHVFAFVIALVGLVAVF). Heme b is bound by residues histidine 88, 117–120 (DLYS), and histidine 122. The Vesicular portion of the chain corresponds to 108-125 (EHHRKKGYADLYSLHSWC). Residues 126 to 146 (GILVFALFFAQWLVGFSFFLF) traverse the membrane as a helical segment. Residues 147 to 159 (PGASFSLRSRYRP) lie on the Cytoplasmic side of the membrane. Arginine 154 is a binding site for L-ascorbate. Residues 160–180 (QHVFFGAAIFLLSVATALLGL) traverse the membrane as a helical segment. Heme b contacts are provided by histidine 161 and glutamate 182. The Vesicular segment spans residues 181 to 199 (KEALLFELGTKYSTFEPEG). The chain crosses the membrane as a helical span at residues 200–220 (VLANVLGLLLAAFATVVLYIL). The Cytoplasmic portion of the chain corresponds to 221–252 (TRADWKRPLQAEEQALSMDFKTLTEGDSPSSQ). Lysine 226 lines the heme b pocket. Phosphoserine is present on residues serine 248 and serine 250.

Heme b serves as cofactor.

Its subcellular location is the cytoplasmic vesicle. The protein resides in the secretory vesicle. It localises to the chromaffin granule membrane. The enzyme catalyses monodehydro-L-ascorbate radical(out) + L-ascorbate(in) = monodehydro-L-ascorbate radical(in) + L-ascorbate(out). In terms of biological role, transmembrane reductase that uses ascorbate as an electron donor in the cytoplasm and transfers electrons across membranes to reduce monodehydro-L-ascorbate radical in the lumen of secretory vesicles. It is therefore involved the regeneration and homeostasis within secretory vesicles of ascorbate which in turn provides reducing equivalents needed to support the activity of intravesicular enzymes. In Ovis aries (Sheep), this protein is Transmembrane ascorbate-dependent reductase CYB561 (CYB561).